Consider the following 859-residue polypeptide: MCAGFYVAVHPWLEAQSLHKVGHTGNLAARLHDGSYTTCFTDEWKYCFTLETSTKKDAQKIEAGVLYCAQFFRVKNKELVCLLPEKIKQLAEDVANCLDISYTLCDSPAYEMNDSTIVVEPSLPSDPLISKEKLRHLVITPVEDEEHFADDVLFFSTDETRTAIEDRLYQKEAANMGYQELRRSGRAILQMACRCGKTRVAYLILSNYLQGKVLYLVPGLSLLRQTLEKLYQYGISLKNVLLVGSDQTRIVLNHDNIEMTTNPVFIAKRIREAPSLLVIATYQSSTLLVDDFDLIISDECHRICGEWETRPFTHVLLNFKKGHRLFLTATPRYDTPLSMKNRELFGGVAFRYYLREGIEAGYVNDFELQMVAAPKLAHQPSTKEETTKQIIVKQIIMALAHLKTNITAPKMLVFTRDIKQAKELYAELVDQGVYALIAHSTLPRQVILKTFTEFCSSKEPVILLNCRLFQEGVEVPELNAVFFAAPRHSPRDIIQSICRPLNKQVQKPHATIFLPLEVNTENVCLDRFSSIIPFADALASEDPRFYEHLLNPSEVAYPINWIGAHGSVSELLQLARHAIRYGTQGKIDRLTRSERLPWKAAFAELKRTVEICCRYPKINDGFHFGGATLRFDTWYKWVIKSYLQYKNKEPSSLEPYQVSDLESLQDWTTRGVGGPYPWEESMAFLETWLAQNKGELVAIDIHQGGWIGLDATPMERLSGVLTTVSQRDGRSYGKNKKLRPKKGFMIPPQQAQDLDRIFGKHNLKWRKDRVNGFLKEDEHGNYTGEPTCIQEAYRTFKEYVKTNPEYIEKYWPGYAKGKHKHQELPHIWEKGLAPPRYKAFKDGNKQLIQRSPKKKDIKN.

A Helicase ATP-binding domain is found at Tyr178–Ala349. Position 191–198 (Met191–Thr198) interacts with ATP. The DEAH box signature appears at Asp298 to His301. A Helicase C-terminal domain is found at His401–Ser553.

The protein belongs to the asfivirus helicase A859L family.

The protein is Probable helicase A859L of African swine fever virus (isolate Tick/South Africa/Pretoriuskop Pr4/1996) (ASFV).